We begin with the raw amino-acid sequence, 159 residues long: ATP synthase subunit b (159 aa).

The helical transmembrane segment at 8–28 (ILATIINFIILILILKHFFWD) threads the bilayer.

Belongs to the ATPase B chain family. As to quaternary structure, F-type ATPases have 2 components, F(1) - the catalytic core - and F(0) - the membrane proton channel. F(1) has five subunits: alpha(3), beta(3), gamma(1), delta(1), epsilon(1). F(0) has three main subunits: a(1), b(2) and c(10-14). The alpha and beta chains form an alternating ring which encloses part of the gamma chain. F(1) is attached to F(0) by a central stalk formed by the gamma and epsilon chains, while a peripheral stalk is formed by the delta and b chains.

The protein localises to the cell membrane. Its function is as follows. F(1)F(0) ATP synthase produces ATP from ADP in the presence of a proton or sodium gradient. F-type ATPases consist of two structural domains, F(1) containing the extramembraneous catalytic core and F(0) containing the membrane proton channel, linked together by a central stalk and a peripheral stalk. During catalysis, ATP synthesis in the catalytic domain of F(1) is coupled via a rotary mechanism of the central stalk subunits to proton translocation. In terms of biological role, component of the F(0) channel, it forms part of the peripheral stalk, linking F(1) to F(0). The chain is ATP synthase subunit b from Clostridium perfringens (strain SM101 / Type A).